Here is a 119-residue protein sequence, read N- to C-terminus: MQAKAILRHTPTSPRKMRLVAGLVRGKAVDQAKAILLNSTKAASRNALQTLKSAVANYAQLNPDERVGDQELFVKSVFVDEGATLKRMLPAPMGRAYRVRKRSNHLTIVVDRVKNPETK.

Belongs to the universal ribosomal protein uL22 family. As to quaternary structure, part of the 50S ribosomal subunit.

In terms of biological role, this protein binds specifically to 23S rRNA; its binding is stimulated by other ribosomal proteins, e.g. L4, L17, and L20. It is important during the early stages of 50S assembly. It makes multiple contacts with different domains of the 23S rRNA in the assembled 50S subunit and ribosome. The globular domain of the protein is located near the polypeptide exit tunnel on the outside of the subunit, while an extended beta-hairpin is found that lines the wall of the exit tunnel in the center of the 70S ribosome. The polypeptide is Large ribosomal subunit protein uL22 (Chlorobium phaeovibrioides (strain DSM 265 / 1930) (Prosthecochloris vibrioformis (strain DSM 265))).